The sequence spans 685 residues: Stromal interaction molecule 1 (685 aa).

An N-terminal signal peptide occupies residues 1-22; that stretch reads MDVCVRLALWLLWGLLLHQGQS. Residues 23–213 lie on the Extracellular side of the membrane; that stretch reads LSHSHSEKAT…LLTRHNHLKD (191 aa). EF-hand domains are found at residues 64 to 97 and 102 to 126; these read SFEA…EDLN and TVKH…AWKS. Ca(2+) is bound by residues Asp76, Asp78, Asn80, Asp82, and Glu87. N-linked (GlcNAc...) asparagine glycans are attached at residues Asn131 and Asn171. The SAM domain maps to 132-200; that stretch reads WTVDEVVQWL…QLKALDTVLF (69 aa). A helical membrane pass occupies residues 214-234; it reads FMLVVSIVIGVGGCWFAYIQN. Residues 235–685 are Cytoplasmic-facing; sequence RYSKEHMKKM…LKIFKKPLKK (451 aa). Positions 248–442 form a coiled coil; sequence LEGLHRAEQS…IEILCGFQIV (195 aa). Ser257 is modified (phosphoserine). The SOAR/CAD stretch occupies residues 344–442; that stretch reads PEALQKWLQL…IEILCGFQIV (99 aa). Positions 475–483 are contributes to fast Ca(2+)-dependent inactivation of CRAC channels; that stretch reads DDVDDMDEE. A compositionally biased stretch (low complexity) spans 490–499; it reads MQSPSLQSSV. The interval 490–542 is disordered; the sequence is MQSPSLQSSVRQRLTEPQHGLGSQRDLTHSDSESSLHMSDRQRVAPKPPQMSR. Position 504 is a phosphothreonine (Thr504). At Ser512 the chain carries Phosphoserine. The span at 515-532 shows a compositional bias: basic and acidic residues; sequence DLTHSDSESSLHMSDRQR. Residue Thr517 is modified to Phosphothreonine. Phosphoserine occurs at positions 519, 521, 523, 524, 567, 575, 602, 608, 618, 621, and 628. The segment at 596–685 is disordered; it reads LMELSPSAPP…LKIFKKPLKK (90 aa). A compositionally biased stretch (low complexity) spans 608–620; that stretch reads SPHLDSSRSHSPS. The Microtubule tip localization signal motif lies at 642 to 645; sequence TRIP. Acidic residues predominate over residues 655-666; the sequence is EEDNGSIGEETD. Phosphoserine is present on Ser660. Thr665 bears the Phosphothreonine mark. Ser668 carries the phosphoserine modification. Positions 670–685 are enriched in basic residues; it reads GRKKFPLKIFKKPLKK. The segment at 672–685 is required for generation of inwardly rectifying CRAC currents; that stretch reads KKFPLKIFKKPLKK.

As to quaternary structure, monomer in the presence of Ca(2+); it oligomerizes in absence of Ca(2+). Forms homooligomers and heterooligomers with STIM2. Interacts with pore-forming subunits of CRAC channels, ORAI1, ORAI2 and ORAI3; this interaction is potentiated upon Ca(2+) store depletion. Interacts (via the transmembrane region and the SOAR/CAD domain) with SPPL3; the interaction promotes the binding of STIM1 to ORAI1. Interacts (via the SOAR/CAD domain) with ORAI1. Interacts with MAPRE1; probably required for targeting to the growing microtubule plus ends. Interacts with CRACR2A/EFCAB4B; the interaction is direct and takes place in absence of Ca(2+). Forms a complex with CRACR2A/EFCAB4B and ORAI1 at low concentration of Ca(2+), the complex dissociates at elevated Ca(2+) concentrations. Interacts with SARAF, promoting a slow inactivation of STIM1-dependent SOCE activity, possibly by facilitating the deoligomerization of STIM1. Interacts with EFHB; the interaction takes place upon Ca(2+)-store depletion and inhibits the association with SARAF. Interacts with ASPH (isoform 8). Interacts with SLC35G1; intracellular Ca(2+)-dependent. May interact with ATP1A1, ATP2A2, ATP2B1, ATP2B4, KPNB1 and XPO1; through SLC35G1. Interacts with TMEM203. Interacts with STIMATE, promoting STIM1 conformational switch. Interacts with TMEM178A. Interacts with CASQ1 (via C-terminal end and preferentially with the monomeric form); this interaction increases in response to a depletion of intracellular Ca(2+), decreases both STIM1 aggregation and clustering, interaction of STIM1 with ORAI1 and store-operated Ca(2+) entry (SOCE) activity. Interacts with ADCY8. Glycosylation is required for cell surface expression. Post-translationally, phosphorylated predominantly on Ser residues. In terms of tissue distribution, ubiquitously expressed in various human primary cells and tumor cell lines.

It is found in the cell membrane. It localises to the endoplasmic reticulum membrane. Its subcellular location is the cytoplasm. The protein resides in the cytoskeleton. The protein localises to the sarcoplasmic reticulum. In terms of biological role, acts as a Ca(2+) sensor that gates two major inward rectifying Ca(2+) channels at the plasma membrane: Ca(2+) release-activated Ca(2+) (CRAC) channels and arachidonate-regulated Ca(2+)-selective (ARC) channels. Plays a role in mediating store-operated Ca(2+) entry (SOCE), a Ca(2+) influx following depletion of intracellular Ca(2+) stores. Upon Ca(2+) depletion, translocates from the endoplasmic reticulum to the plasma membrane where it activates CRAC channel pore-forming subunits ORA1, ORA2 and ORAI3 to generate sustained and oscillatory Ca(2+) entry. Involved in enamel formation. The polypeptide is Stromal interaction molecule 1 (STIM1) (Homo sapiens (Human)).